We begin with the raw amino-acid sequence, 632 residues long: MTHEFTESYDVIVIGAGHAGVEASLATSRMGCKTLLATINLDMLAFMPCNPSIGGSAKGIVVREIDALGGEMGKNIDKTYIQMKMLNTGKGPAVRALRAQADKSLYAREMKHTVEKQANLTLRQTMIDDILVEDGRVVGVLTATGQKFAAKAVVVTTGTALRGEIILGELKYSSGPNNSLASVTLADNLKKLGLEIGRFKTGTPPRVKASSINYDQTEIQPGDDKPNHFSFMSKDADYLKDQIPCWLTYTNQTSHDIINQNLYRAPMFSGVVKGVGPRYCPSIEDKIVRFADKERHQLFLEPEGRDTEEVYVQGLSTSLPEDVQKDLIHSIKGLEKAEMMRTGYAIEYDIVLPHQLRATLETKLISGLFTAGQTNGTSGYEEAAGQGLIAGINAALKVQGKPELILKRSDAYIGVMIDDLVTKGTLEPYRLLTSRAEYRLILRHDNADMRLTEIGRDIGLVDDERWKAFEIKKNQFDNELKRLDSIKLKPIKETNDRVQDLGFKPLTDAMTAKEFMRRPEIDYATAVSFVGPAAEDLDAKIIELLETEIKYEGYIRKALDQVAKMKRMEEKRIPANIDWDAIDSIATEARQKFKKINPETIGQASRISGVNPADISILMIYLEGNGKAHRKY.

FAD is bound by residues 15–20, Ile-127, and Ser-182; that span reads GAGHAG. 276-290 contributes to the NAD(+) binding site; that stretch reads GPRYCPSIEDKIVRF. Gln-373 provides a ligand contact to FAD.

This sequence belongs to the MnmG family. As to quaternary structure, homodimer. Heterotetramer of two MnmE and two MnmG subunits. FAD is required as a cofactor.

Its subcellular location is the cytoplasm. Functionally, NAD-binding protein involved in the addition of a carboxymethylaminomethyl (cmnm) group at the wobble position (U34) of certain tRNAs, forming tRNA-cmnm(5)s(2)U34. The chain is tRNA uridine 5-carboxymethylaminomethyl modification enzyme MnmG from Streptococcus pyogenes serotype M2 (strain MGAS10270).